The following is a 228-amino-acid chain: MAREKKTCVECGHKVKSLFIQYSPGNFRLMKCENCEEVADEYVECELLIIFIDLILHKTKAYRHLLYNVVNQESANVQHLLWKLVLAYLLLDTYRSLLLRRTNDGSNVSMSFLFESLEVLVNVLSANFAFVFSFAFAAKLMLVMPRGKEILLTILISSYVKIFLFAMPVWEFPVSVIFIVDMLVLTSNAVALKVMTESATSRCLAVCFIAHSIRFLVDQISGHLGSVM.

The next 2 membrane-spanning stretches (helical) occupy residues glutamate 37–histidine 57 and leucine 80–arginine 100. N-linked (GlcNAc...) asparagine glycosylation is present at asparagine 107. 3 helical membrane passes run valine 123–valine 143, isoleucine 150–tryptophan 170, and valine 176–threonine 196.

The protein belongs to the ARV1 family. As to expression, restricted to tissues in which cells are actively dividing or expanding. Mostly expressed in roots and flowers, and, to a lower extent, in stems and leaves.

The protein localises to the endoplasmic reticulum membrane. Its function is as follows. Mediator of sterol homeostasis involved in sterol uptake, trafficking and distribution into membranes. Also regulates the sphingolipid metabolism. The chain is Protein ARV 2 from Arabidopsis thaliana (Mouse-ear cress).